Here is a 130-residue protein sequence, read N- to C-terminus: Glycine cleavage system H protein (130 aa).

In terms of domain architecture, Lipoyl-binding spans 24–106 (TATVGITDFA…YGDGWMFKVK (83 aa)). Lys65 carries the post-translational modification N6-lipoyllysine.

It belongs to the GcvH family. In terms of assembly, the glycine cleavage system is composed of four proteins: P, T, L and H. Requires (R)-lipoate as cofactor.

Its function is as follows. The glycine cleavage system catalyzes the degradation of glycine. The H protein shuttles the methylamine group of glycine from the P protein to the T protein. The protein is Glycine cleavage system H protein of Marinobacter nauticus (strain ATCC 700491 / DSM 11845 / VT8) (Marinobacter aquaeolei).